A 221-amino-acid chain; its full sequence is PKHD-type hydroxylase Pro_1271 (221 aa).

The Fe2OG dioxygenase domain maps to 80–174 (KVHGVMFSKS…RIVCVGWIQS (95 aa)). Residues H98, D100, and H155 each coordinate Fe cation. R165 contacts 2-oxoglutarate.

Fe(2+) serves as cofactor. It depends on L-ascorbate as a cofactor.

The chain is PKHD-type hydroxylase Pro_1271 from Prochlorococcus marinus (strain SARG / CCMP1375 / SS120).